The sequence spans 213 residues: Adenylate kinase (213 aa).

10 to 15 (GSGKGT) lines the ATP pocket. Positions 30 to 59 (STGDLFRTNIENDTPLGKEIKQIVENGQLV) are NMP. Residues T31, R36, 57–59 (QLV), 85–88 (GFPR), and Q92 each bind AMP. The tract at residues 121-158 (GRRICQSCCKIFNIYTLPTKEKEICDFCQGILYQRKDD) is LID. R122 lines the ATP pocket. Zn(2+) is bound by residues C125 and C128. Position 131–132 (131–132 (IF)) interacts with ATP. Residues C145 and C148 each coordinate Zn(2+). Residues R155 and R166 each contribute to the AMP site. K194 contacts ATP.

This sequence belongs to the adenylate kinase family. In terms of assembly, monomer.

It localises to the cytoplasm. The enzyme catalyses AMP + ATP = 2 ADP. Its pathway is purine metabolism; AMP biosynthesis via salvage pathway; AMP from ADP: step 1/1. In terms of biological role, catalyzes the reversible transfer of the terminal phosphate group between ATP and AMP. Plays an important role in cellular energy homeostasis and in adenine nucleotide metabolism. The polypeptide is Adenylate kinase (Borrelia duttonii (strain Ly)).